The chain runs to 107 residues: YcgL domain-containing protein Psyc_0800 (107 aa).

The YcgL domain maps to 1–95 (MHCDIYKFLK…QDVMRRQAEL (95 aa)).

The sequence is that of YcgL domain-containing protein Psyc_0800 from Psychrobacter arcticus (strain DSM 17307 / VKM B-2377 / 273-4).